The chain runs to 345 residues: Methionine import ATP-binding protein MetN (345 aa).

In terms of domain architecture, ABC transporter spans 2–241; the sequence is IKLKNISKVF…PKTLLAQEFI (240 aa). 38 to 45 contributes to the ATP binding site; that stretch reads GASGAGKS.

Belongs to the ABC transporter superfamily. Methionine importer (TC 3.A.1.24) family. In terms of assembly, the complex is composed of two ATP-binding proteins (MetN), two transmembrane proteins (MetI) and a solute-binding protein (MetQ).

It localises to the cell inner membrane. The catalysed reaction is L-methionine(out) + ATP + H2O = L-methionine(in) + ADP + phosphate + H(+). It catalyses the reaction D-methionine(out) + ATP + H2O = D-methionine(in) + ADP + phosphate + H(+). In terms of biological role, part of the ABC transporter complex MetNIQ involved in methionine import. Responsible for energy coupling to the transport system. The protein is Methionine import ATP-binding protein MetN of Histophilus somni (strain 129Pt) (Haemophilus somnus).